The chain runs to 492 residues: MO25-like protein 3 (492 aa).

The tract at residues 442–492 is disordered; sequence SRAGIRFGETRNVKGSPRSRSQSPRPPTGPEPSPRTTSYQNVRFPPEDSSR. Residues 465–474 are compositionally biased toward pro residues; the sequence is PRPPTGPEPS.

Belongs to the Mo25 family.

This chain is MO25-like protein 3, found in Caenorhabditis briggsae.